The sequence spans 149 residues: Large ribosomal subunit protein bL9 (149 aa).

The protein belongs to the bacterial ribosomal protein bL9 family.

In terms of biological role, binds to the 23S rRNA. In Bacillus licheniformis (strain ATCC 14580 / DSM 13 / JCM 2505 / CCUG 7422 / NBRC 12200 / NCIMB 9375 / NCTC 10341 / NRRL NRS-1264 / Gibson 46), this protein is Large ribosomal subunit protein bL9.